Here is a 132-residue protein sequence, read N- to C-terminus: T-cell receptor alpha chain V region 2B4 (132 aa).

Positions 1 to 20 are cleaved as a signal peptide; sequence MKSLSVSLVVLWLLLNWVNS. Residues 21-113 form a v segment region; sequence QQNVQQSPES…SALYLCAVTL (93 aa). Asn42 is a glycosylation site (N-linked (GlcNAc...) asparagine). A d segment region spans residues 114 to 117; it reads YGGS. The tract at residues 118–132 is j segment; it reads GNKLIFGTGTLLSVK.

This is T-cell receptor alpha chain V region 2B4 from Mus musculus (Mouse).